A 597-amino-acid polypeptide reads, in one-letter code: Aspartate--tRNA(Asp/Asn) ligase (597 aa).

Glu170 serves as a coordination point for L-aspartate. The aspartate stretch occupies residues 194–197 (QLFK). An L-aspartate-binding site is contributed by Arg216. ATP-binding positions include 216 to 218 (RDE) and Gln225. Position 448 (His448) interacts with L-aspartate. Residue Glu482 participates in ATP binding. Arg489 is a binding site for L-aspartate. 534 to 537 (GWDR) serves as a coordination point for ATP. Positions 558–597 (GGGVDPLTDAPAPITAAQRKESGIDAKPEKAEKAGKPADA) are disordered. Residues 575–597 (QRKESGIDAKPEKAEKAGKPADA) show a composition bias toward basic and acidic residues.

It belongs to the class-II aminoacyl-tRNA synthetase family. Type 1 subfamily. In terms of assembly, homodimer.

The protein resides in the cytoplasm. It carries out the reaction tRNA(Asx) + L-aspartate + ATP = L-aspartyl-tRNA(Asx) + AMP + diphosphate. Functionally, aspartyl-tRNA synthetase with relaxed tRNA specificity since it is able to aspartylate not only its cognate tRNA(Asp) but also tRNA(Asn). Reaction proceeds in two steps: L-aspartate is first activated by ATP to form Asp-AMP and then transferred to the acceptor end of tRNA(Asp/Asn). The protein is Aspartate--tRNA(Asp/Asn) ligase of Mycobacteroides abscessus (strain ATCC 19977 / DSM 44196 / CCUG 20993 / CIP 104536 / JCM 13569 / NCTC 13031 / TMC 1543 / L948) (Mycobacterium abscessus).